Consider the following 226-residue polypeptide: Enolase-phosphatase E1 (226 aa).

The protein belongs to the HAD-like hydrolase superfamily. MasA/MtnC family. As to quaternary structure, monomer. Mg(2+) serves as cofactor.

The catalysed reaction is 5-methylsulfanyl-2,3-dioxopentyl phosphate + H2O = 1,2-dihydroxy-5-(methylsulfanyl)pent-1-en-3-one + phosphate. The protein operates within amino-acid biosynthesis; L-methionine biosynthesis via salvage pathway; L-methionine from S-methyl-5-thio-alpha-D-ribose 1-phosphate: step 3/6. It participates in amino-acid biosynthesis; L-methionine biosynthesis via salvage pathway; L-methionine from S-methyl-5-thio-alpha-D-ribose 1-phosphate: step 4/6. Functionally, bifunctional enzyme that catalyzes the enolization of 2,3-diketo-5-methylthiopentyl-1-phosphate (DK-MTP-1-P) into the intermediate 2-hydroxy-3-keto-5-methylthiopentenyl-1-phosphate (HK-MTPenyl-1-P), which is then dephosphorylated to form the acireductone 1,2-dihydroxy-3-keto-5-methylthiopentene (DHK-MTPene). This is Enolase-phosphatase E1 from Shewanella frigidimarina (strain NCIMB 400).